Here is a 354-residue protein sequence, read N- to C-terminus: Ubiquinol oxidase 1a, mitochondrial (354 aa).

A mitochondrion-targeting transit peptide spans 1–62 (MMITRGGAKA…RAPTIGGMRF (62 aa)). The interval 68–99 (LGEKTPMKEEDANQKKTENESTGGDAAGGNNK) is disordered. Basic and acidic residues predominate over residues 72-86 (TPMKEEDANQKKTEN). The chain crosses the membrane as a helical span at residues 179–199 (AMMLETVAAVPGMVGGMLLHC). Fe cation-binding residues include glutamate 183, glutamate 222, and histidine 225. The chain crosses the membrane as a helical span at residues 241–261 (ALVITVQGVFFNAYFLGYLIS). The Fe cation site is built by glutamate 273, glutamate 324, and histidine 327.

It belongs to the alternative oxidase family. Homodimer; disulfide-linked. Fe cation is required as a cofactor. As to expression, expressed in roots, stems, cotyledons, leaves and flowers. High expression in sepals.

It localises to the mitochondrion inner membrane. The enzyme catalyses 2 a ubiquinol + O2 = 2 a ubiquinone + 2 H2O. When the two monomeric subunits are covalently linked by a S-S bond, the enzyme is essentially inactive. When the disulfide bond is reduced, its component sulfhydryls can associate with K-keto acids through formation of a thiohemiacetal, resulting in enzyme activation. Activated by glyoxylate, irrespective to the substitution found at Cys-127. That suggests the presence of a second activation site, possibly Cys-177. Functionally, catalyzes the cyanide-resistant oxidation of ubiquinol and the reduction of molecular oxygen to water, but does not translocate protons and consequently is not linked to oxidative phosphorylation. Increases respiration when the cytochrome respiratory pathway is restricted, or in response to low temperatures. This Arabidopsis thaliana (Mouse-ear cress) protein is Ubiquinol oxidase 1a, mitochondrial (AOX1A).